A 450-amino-acid chain; its full sequence is MSRKYFGTDGIRGRANGLITPELAMKVGQAAGLVFQRGEYRHRVVIGKDTRLSGYMIETALVAGFTSVGMDVLLLGPMPTPAVAMLTKSMRADLGVMISASHNLFEDNGIKLFGPLGFKLSDEVERQIEQLLDECLDKRLAASASLGRARRIDGVHDRYIEFAKRTLPRDLSLDGLRVVIDCANGAAYKVVPEALWELGADVISIGVEPDGFNINKECGSTAPEALSRKVREMRADIGIALDGDADRVILVDERGHVVDGDQLLAVIAQSWQEDGRLSKPGIVATVMSNLGLERFLEGHGIEMVRTPVGDRYVLEQMMTGGYNLGGEPSGHIILSDYATTGDGFVAALQVLAVVQKLGRPVSEVCHKFDPLPQILKNVRFRAGKPLDDADVKSAIRDGEQRLNGHGRLLIRPSGTEPVIRVMAEGDDRDVVEEVVDSICSALGEAAAAAA.

S101 acts as the Phosphoserine intermediate in catalysis. The Mg(2+) site is built by S101, D242, D244, and D246. Residue S101 is modified to Phosphoserine.

The protein belongs to the phosphohexose mutase family. Requires Mg(2+) as cofactor. Activated by phosphorylation.

The enzyme catalyses alpha-D-glucosamine 1-phosphate = D-glucosamine 6-phosphate. Its function is as follows. Catalyzes the conversion of glucosamine-6-phosphate to glucosamine-1-phosphate. In Rhodopseudomonas palustris (strain BisA53), this protein is Phosphoglucosamine mutase.